The following is a 156-amino-acid chain: Acyl carrier protein, mitochondrial (156 aa).

The N-terminal 68 residues, 1-68 (MASRVLSAYV…GRVTQLCRQY (68 aa)), are a transit peptide targeting the mitochondrion. Residues 77-152 (EGIQDRVLYV…EIVDYIADKK (76 aa)) enclose the Carrier domain. Residue Lys88 is modified to N6-acetyllysine. The residue at position 112 (Ser112) is an O-(pantetheine 4'-phosphoryl)serine.

It belongs to the acyl carrier protein (ACP) family. In terms of assembly, mammalian complex I is composed of 45 different subunits. Interacts with ETFRF1. Identified in a complex composed of MALSU1, MIEF1 upstream open reading frame protein and NDUFAB1; within the trimeric complex, MIEF1 upstream open reading frame protein functions as a bridging scaffold that interacts with MALSU1 on one side, and with NDUFAB1 on the other side. The complex interacts with the mitochondrial large ribosomal subunit. Interacts with alpha-1-microglobulin chain; this interaction is required for the maintenance of mitochondrial redox homeostasis. Component of the mitochondrial core iron-sulfur cluster (ISC) complex composed of NFS1, LYRM4, NDUFAB1, ISCU, FXN, and FDX2; this complex is a heterohexamer containing two copies of each monomer. Component of the cyteine desulfurase complex composed of NFS1, LYRM4 and NDUFAB1; this complex contributes to the stability and cysteine desulfurase activity of NFS1. Phosphopantetheinylation at Ser-112 is essential for interactions with LYR motif-containing proteins.

Its subcellular location is the mitochondrion. Functionally, carrier of the growing fatty acid chain in fatty acid biosynthesis. Accessory and non-catalytic subunit of the mitochondrial membrane respiratory chain NADH dehydrogenase (Complex I), which functions in the transfer of electrons from NADH to the respiratory chain. Accessory protein, of the core iron-sulfur cluster (ISC) assembly complex, that regulates, in association with LYRM4, the stability and the cysteine desulfurase activity of NFS1 and participates in the [2Fe-2S] clusters assembly on the scaffolding protein ISCU. The core iron-sulfur cluster (ISC) assembly complex is involved in the de novo synthesis of a [2Fe-2S] cluster, the first step of the mitochondrial iron-sulfur protein biogenesis. This process is initiated by the cysteine desulfurase complex (NFS1:LYRM4:NDUFAB1) that produces persulfide which is delivered on the scaffold protein ISCU in a FXN-dependent manner. Then this complex is stabilized by FDX2 which provides reducing equivalents to accomplish the [2Fe-2S] cluster assembly. Finally, the [2Fe-2S] cluster is transferred from ISCU to chaperone proteins, including HSCB, HSPA9 and GLRX5. The polypeptide is Acyl carrier protein, mitochondrial (Gorilla gorilla gorilla (Western lowland gorilla)).